Here is a 352-residue protein sequence, read N- to C-terminus: Cyclin-dependent kinase-like 1 (352 aa).

The Protein kinase domain maps to 4-287; that stretch reads YEKIGKIGEG…CEQLLQHPYF (284 aa). ATP is bound by residues 10 to 18 and lysine 33; that span reads IGEGSYGVV. The short motif at 45 to 51 is the [NKR]KIAxRE element; it reads KKIALRE. Aspartate 126 (proton acceptor) is an active-site residue.

Belongs to the protein kinase superfamily. CMGC Ser/Thr protein kinase family. CDC2/CDKX subfamily.

It is found in the cytoplasm. The protein resides in the nucleus. The catalysed reaction is L-seryl-[protein] + ATP = O-phospho-L-seryl-[protein] + ADP + H(+). It carries out the reaction L-threonyl-[protein] + ATP = O-phospho-L-threonyl-[protein] + ADP + H(+). This is Cyclin-dependent kinase-like 1 from Rattus norvegicus (Rat).